Here is a 461-residue protein sequence, read N- to C-terminus: Cysteine--tRNA ligase (461 aa).

A Zn(2+)-binding site is contributed by cysteine 28. The 'HIGH' region signature appears at 30-40 (ITVYDLCHIGH). Residues cysteine 209, histidine 234, and glutamate 238 each contribute to the Zn(2+) site. The 'KMSKS' region motif lies at 266–270 (KMSKS). An ATP-binding site is contributed by lysine 269.

Belongs to the class-I aminoacyl-tRNA synthetase family. Monomer. Zn(2+) serves as cofactor.

It is found in the cytoplasm. It carries out the reaction tRNA(Cys) + L-cysteine + ATP = L-cysteinyl-tRNA(Cys) + AMP + diphosphate. This is Cysteine--tRNA ligase from Cronobacter sakazakii (strain ATCC BAA-894) (Enterobacter sakazakii).